A 245-amino-acid polypeptide reads, in one-letter code: 1-(5-phosphoribosyl)-5-[(5-phosphoribosylamino)methylideneamino] imidazole-4-carboxamide isomerase (245 aa).

Residue D7 is the Proton acceptor of the active site. The Proton donor role is filled by D129.

The protein belongs to the HisA/HisF family.

Its subcellular location is the cytoplasm. It carries out the reaction 1-(5-phospho-beta-D-ribosyl)-5-[(5-phospho-beta-D-ribosylamino)methylideneamino]imidazole-4-carboxamide = 5-[(5-phospho-1-deoxy-D-ribulos-1-ylimino)methylamino]-1-(5-phospho-beta-D-ribosyl)imidazole-4-carboxamide. It functions in the pathway amino-acid biosynthesis; L-histidine biosynthesis; L-histidine from 5-phospho-alpha-D-ribose 1-diphosphate: step 4/9. The chain is 1-(5-phosphoribosyl)-5-[(5-phosphoribosylamino)methylideneamino] imidazole-4-carboxamide isomerase from Erwinia tasmaniensis (strain DSM 17950 / CFBP 7177 / CIP 109463 / NCPPB 4357 / Et1/99).